Consider the following 387-residue polypeptide: Methionine aminopeptidase 1 (387 aa).

An N-acetylserine modification is found at serine 2. The propeptide occupies 2 to 10 (STATTTVTT). A C6H2-type zinc finger spans residues 19–73 (KIYCSGLQCGRETSSQMKCPVCLKQGIVSIFCDTSCYENNYKAHKALHNAKDGLE). Positions 22, 27, 37, 40, 50, 54, 62, and 66 each coordinate Zn(2+). Histidine 202 provides a ligand contact to a protein. Residues aspartate 219, aspartate 230, and histidine 294 each coordinate Zn(2+). Histidine 301 lines the a protein pocket. Zn(2+) is bound by residues glutamate 327 and glutamate 358.

The protein belongs to the peptidase M24A family. Methionine aminopeptidase type 1 subfamily. Associates with the 60S ribosomal subunit of the 80S translational complex. Zn(2+) is required as a cofactor. Co(2+) serves as cofactor. It depends on Mn(2+) as a cofactor. The cofactor is Fe(2+).

The protein resides in the cytoplasm. The enzyme catalyses Release of N-terminal amino acids, preferentially methionine, from peptides and arylamides.. In contract to the MetAP 2 isoform, is not inhibited by the fungal metabolite fumagillin, an antiangiogenic drug. In terms of biological role, cotranslationally removes the N-terminal methionine from nascent proteins. The N-terminal methionine is often cleaved when the second residue in the primary sequence is small and uncharged (Met-Ala-, Cys, Gly, Pro, Ser, Thr, or Val). Plays the major role in N-terminal methionine removal. Less efficient when the second residue is Val. This chain is Methionine aminopeptidase 1 (MAP1), found in Saccharomyces cerevisiae (strain ATCC 204508 / S288c) (Baker's yeast).